Consider the following 50-residue polypeptide: Fungus-induced-related protein 15 (50 aa).

The first 21 residues, 1-21 (MNFYSLFVFIALIFSFNVVHG), serve as a signal peptide directing secretion.

May have role in hypoxia response. In Caenorhabditis elegans, this protein is Fungus-induced-related protein 15 (fipr-15).